The following is a 145-amino-acid chain: Protein AggB (145 aa).

An N-terminal signal peptide occupies residues 1–24; the sequence is MLKKSILPMSCGVLVMVMSGLLDA.

The protein to E.coli AfaD.

The chain is Protein AggB (aggB) from Escherichia coli.